Reading from the N-terminus, the 193-residue chain is 3-isopropylmalate dehydratase small subunit (193 aa).

It belongs to the LeuD family. LeuD type 1 subfamily. In terms of assembly, heterodimer of LeuC and LeuD.

The enzyme catalyses (2R,3S)-3-isopropylmalate = (2S)-2-isopropylmalate. The protein operates within amino-acid biosynthesis; L-leucine biosynthesis; L-leucine from 3-methyl-2-oxobutanoate: step 2/4. Catalyzes the isomerization between 2-isopropylmalate and 3-isopropylmalate, via the formation of 2-isopropylmaleate. The chain is 3-isopropylmalate dehydratase small subunit from Bacillus anthracis (strain CDC 684 / NRRL 3495).